We begin with the raw amino-acid sequence, 347 residues long: Ion-translocating oxidoreductase complex subunit D (347 aa).

4 helical membrane-spanning segments follow: residues 15 to 35 (IMFL…YFFG), 36 to 56 (IGTL…EIII), 84 to 104 (IPPL…IVVA), and 114 to 134 (NIFN…PVYM). The residue at position 182 (Thr182) is an FMN phosphoryl threonine. Transmembrane regions (helical) follow at residues 217 to 237 (CINI…IICW), 239 to 259 (IPIS…FYSK), 261 to 281 (LFMS…AFFI), 289 to 309 (ACNN…VWII), and 315 to 335 (YPDA…LVDY).

The protein belongs to the NqrB/RnfD family. As to quaternary structure, the complex is composed of six subunits: RnfA, RnfB, RnfC, RnfD, RnfE and RnfG. FMN serves as cofactor.

Its subcellular location is the cell inner membrane. Functionally, part of a membrane-bound complex that couples electron transfer with translocation of ions across the membrane. This is Ion-translocating oxidoreductase complex subunit D from Buchnera aphidicola subsp. Acyrthosiphon pisum (strain 5A).